We begin with the raw amino-acid sequence, 154 residues long: UPF0756 membrane protein RBAM_026200 (154 aa).

4 helical membrane-spanning segments follow: residues 14 to 34 (AIAL…LIVI), 54 to 74 (WGVT…DIGF), 87 to 107 (WIAL…LTLL), and 117 to 137 (LVIG…GPLI).

It belongs to the UPF0756 family.

Its subcellular location is the cell membrane. This Bacillus velezensis (strain DSM 23117 / BGSC 10A6 / LMG 26770 / FZB42) (Bacillus amyloliquefaciens subsp. plantarum) protein is UPF0756 membrane protein RBAM_026200.